A 241-amino-acid polypeptide reads, in one-letter code: Triosephosphate isomerase (241 aa).

9 to 11 (NWK) is a substrate binding site. Histidine 88 serves as the catalytic Electrophile. Glutamate 158 functions as the Proton acceptor in the catalytic mechanism. Residues glycine 164, serine 203, and 224–225 (GG) each bind substrate.

Belongs to the triosephosphate isomerase family. In terms of assembly, homodimer.

It is found in the cytoplasm. The enzyme catalyses D-glyceraldehyde 3-phosphate = dihydroxyacetone phosphate. The protein operates within carbohydrate biosynthesis; gluconeogenesis. It functions in the pathway carbohydrate degradation; glycolysis; D-glyceraldehyde 3-phosphate from glycerone phosphate: step 1/1. Its function is as follows. Involved in the gluconeogenesis. Catalyzes stereospecifically the conversion of dihydroxyacetone phosphate (DHAP) to D-glyceraldehyde-3-phosphate (G3P). The protein is Triosephosphate isomerase of Dichelobacter nodosus (strain VCS1703A).